Reading from the N-terminus, the 281-residue chain is Predicted GPI-anchored protein 39 (281 aa).

Positions 1-18 (MKATTFTLLLSIATAINA) are cleaved as a signal peptide. Disordered regions lie at residues 52-94 (HHHG…SASV) and 106-227 (VSVS…SSSE). Low complexity-rich tracts occupy residues 69 to 94 (SSSSVSESTVEELSTTTTTESVSASV), 106 to 158 (VSVS…STTD), 167 to 203 (ATDSVETTFESVSNTEDLSSSSSSIITDSSESTIEET), and 210 to 227 (SVPSSLSEEYSTSGSSSE). Asparagine 150 carries N-linked (GlcNAc...) asparagine glycosylation. N-linked (GlcNAc...) asparagine glycans are attached at residues asparagine 239, asparagine 246, asparagine 249, and asparagine 252. A lipid anchor (GPI-anchor amidated serine) is attached at serine 256. The propeptide at 257–281 (ANFAIQYGTDYGVAVVAAIVGALLI) is removed in mature form.

The protein resides in the cell membrane. The polypeptide is Predicted GPI-anchored protein 39 (PGA39) (Candida albicans (strain SC5314 / ATCC MYA-2876) (Yeast)).